Reading from the N-terminus, the 376-residue chain is 5-amino-6-(D-ribitylamino)uracil--L-tyrosine 4-hydroxyphenyl transferase 1 (376 aa).

The region spanning 50-284 (VTYVVNRNIN…AISRILLHGH (235 aa)) is the Radical SAM core domain. Residues Cys-64, Cys-68, and Cys-71 each coordinate [4Fe-4S] cluster.

The protein belongs to the radical SAM superfamily. CofH family. Consists of two subunits, CofG and CofH. [4Fe-4S] cluster serves as cofactor.

The enzyme catalyses 5-amino-6-(D-ribitylamino)uracil + L-tyrosine + S-adenosyl-L-methionine = 5-amino-5-(4-hydroxybenzyl)-6-(D-ribitylimino)-5,6-dihydrouracil + 2-iminoacetate + 5'-deoxyadenosine + L-methionine + H(+). Its pathway is cofactor biosynthesis; coenzyme F0 biosynthesis. Its function is as follows. Catalyzes the radical-mediated synthesis of 5-amino-5-(4-hydroxybenzyl)-6-(D-ribitylimino)-5,6-dihydrouracil from 5-amino-6-(D-ribitylamino)uracil and L-tyrosine. The protein is 5-amino-6-(D-ribitylamino)uracil--L-tyrosine 4-hydroxyphenyl transferase 1 of Methanosarcina barkeri (strain Fusaro / DSM 804).